Consider the following 91-residue polypeptide: DNA-directed RNA polymerase subunit omega (91 aa).

Belongs to the RNA polymerase subunit omega family. The RNAP catalytic core consists of 2 alpha, 1 beta, 1 beta' and 1 omega subunit. When a sigma factor is associated with the core the holoenzyme is formed, which can initiate transcription.

The enzyme catalyses RNA(n) + a ribonucleoside 5'-triphosphate = RNA(n+1) + diphosphate. Functionally, promotes RNA polymerase assembly. Latches the N- and C-terminal regions of the beta' subunit thereby facilitating its interaction with the beta and alpha subunits. In Photorhabdus laumondii subsp. laumondii (strain DSM 15139 / CIP 105565 / TT01) (Photorhabdus luminescens subsp. laumondii), this protein is DNA-directed RNA polymerase subunit omega.